A 271-amino-acid polypeptide reads, in one-letter code: Integral membrane protein 2C (271 aa).

Threonine 41 is subject to Phosphothreonine. A helical; Signal-anchor for type II membrane protein membrane pass occupies residues 59-79 (VGGVCYLSMGMVVLLMGLVFA). The 95-residue stretch at 140–234 (FGGGDPADII…LCSGKDTYRL (95 aa)) folds into the BRICHOS domain. A disulfide bridge connects residues cysteine 167 and cysteine 226. Residue asparagine 173 is glycosylated (N-linked (GlcNAc...) asparagine).

The protein belongs to the ITM2 family. As to quaternary structure, interacts with BACE1. Interacts with APP. Interacts with STMN2. Post-translationally, type I membrane-bound, as well as soluble, furin has a pre-eminent role in ITM2C proteolytic processing. PCSK7 and PCSK5 may also be involved although to a lesser extent. The soluble form of PCSK7 is incapable of processing ITM2C. Fails to undergo shedding by ADAM10 and intramembrane cleavage by SPPL2B.

The protein resides in the lysosome membrane. The protein localises to the cell membrane. Negative regulator of amyloid-beta peptide production. May inhibit the processing of APP by blocking its access to alpha- and beta-secretase. Binding to the beta-secretase-cleaved APP C-terminal fragment is negligible, suggesting that ITM2C is a poor gamma-secretase cleavage inhibitor. May play a role in TNF-induced cell death and neuronal differentiation. The chain is Integral membrane protein 2C (ITM2C) from Bos taurus (Bovine).